A 539-amino-acid chain; its full sequence is 2,3-bisphosphoglycerate-independent phosphoglycerate mutase (539 aa).

Residues Asp-37 and Ser-86 each coordinate Mn(2+). Residue Ser-86 is part of the active site. Substrate contacts are provided by residues His-147, 177–178 (RD), Arg-210, Arg-216, 284–287 (RADR), and Lys-359. Asp-426, His-430, Asp-467, His-468, and His-485 together coordinate Mn(2+).

Belongs to the BPG-independent phosphoglycerate mutase family. The cofactor is Mg(2+). Mn(2+) is required as a cofactor. As to expression, expressed ubiquitously. High expression levels in the nerve ring region, intestine and body wall muscles.

The enzyme catalyses (2R)-2-phosphoglycerate = (2R)-3-phosphoglycerate. The protein operates within carbohydrate degradation; glycolysis; pyruvate from D-glyceraldehyde 3-phosphate: step 3/5. Activity is not affected by 2,3-bisphosphoglycerate. In terms of biological role, catalyzes the interconversion of 2-phosphoglycerate and 3-phosphoglycerate. The sequence is that of 2,3-bisphosphoglycerate-independent phosphoglycerate mutase from Caenorhabditis elegans.